Reading from the N-terminus, the 263-residue chain is uncharacterized protein (263 aa).

This is an uncharacterized protein from Bacillus subtilis (strain 168).